The chain runs to 416 residues: Cyclin-dependent kinase 8 (416 aa).

An interaction with CCNC region spans residues 1 to 15 (MDYDFKVKLTGERER). Residues 21 to 287 (EYEGCKVGRG…SEQAMQDPYF (267 aa)) enclose the Protein kinase domain. Residues 27-35 (VGRGTYGHV) and K52 contribute to the ATP site. D151 (proton acceptor) is an active-site residue. Positions 313 to 416 (EEEPDDKGDK…PQYSHQTHRY (104 aa)) are disordered. Residues 325–343 (QQQQQGNNHTNGTGHPGNQ) show a composition bias toward low complexity. Polar residues-rich tracts occupy residues 361 to 378 (PTTT…QRSN) and 386 to 416 (PGPS…THRY).

Belongs to the protein kinase superfamily. CMGC Ser/Thr protein kinase family. CDC2/CDKX subfamily. As to quaternary structure, component of the Mediator complex. Interacts with ccnc. Mg(2+) is required as a cofactor.

The protein localises to the nucleus. The enzyme catalyses L-seryl-[protein] + ATP = O-phospho-L-seryl-[protein] + ADP + H(+). It carries out the reaction L-threonyl-[protein] + ATP = O-phospho-L-threonyl-[protein] + ADP + H(+). The catalysed reaction is [DNA-directed RNA polymerase] + ATP = phospho-[DNA-directed RNA polymerase] + ADP + H(+). Its function is as follows. Component of the Mediator complex, a coactivator involved in regulated gene transcription of nearly all RNA polymerase II-dependent genes. Mediator functions as a bridge to convey information from gene-specific regulatory proteins to the basal RNA polymerase II transcription machinery. Mediator is recruited to promoters by direct interactions with regulatory proteins and serves as a scaffold for the assembly of a functional pre-initiation complex with RNA polymerase II and the general transcription factors. Phosphorylates the CTD (C-terminal domain) of the large subunit of RNA polymerase II (RNAp II), which may inhibit the formation of a transcription initiation complex. In Xenopus laevis (African clawed frog), this protein is Cyclin-dependent kinase 8 (cdk8).